We begin with the raw amino-acid sequence, 206 residues long: Probable thymidylate kinase (206 aa).

10 to 17 (GIDGSGKS) is an ATP binding site.

The protein belongs to the thymidylate kinase family.

It catalyses the reaction dTMP + ATP = dTDP + ADP. The sequence is that of Probable thymidylate kinase from Methanosarcina mazei (strain ATCC BAA-159 / DSM 3647 / Goe1 / Go1 / JCM 11833 / OCM 88) (Methanosarcina frisia).